The chain runs to 176 residues: Nucleoside triphosphate/diphosphate phosphatase (176 aa).

The Proton donor role is filled by R23. Positions 87, 103, 105, 107, 120, and 123 each coordinate Mg(2+).

This sequence belongs to the Ntdp family. The cofactor is Mg(2+).

The catalysed reaction is a ribonucleoside 5'-triphosphate + H2O = a ribonucleoside 5'-diphosphate + phosphate + H(+). The enzyme catalyses a ribonucleoside 5'-diphosphate + H2O = a ribonucleoside 5'-phosphate + phosphate + H(+). Functionally, has nucleoside phosphatase activity towards nucleoside triphosphates and nucleoside diphosphates. The protein is Nucleoside triphosphate/diphosphate phosphatase of Bacillus anthracis (strain A0248).